We begin with the raw amino-acid sequence, 1243 residues long: Serine/threonine-protein kinase/endoribonuclease IRE1 (1243 aa).

The N-terminal stretch at 1–35 (MMRRPPSQGRWSASHQKLLLAFAFILIPWLQLADA) is a signal peptide. Residues 36–585 (QQQPQQPQIR…VKALPQSAAN (550 aa)) lie on the Lumenal side of the membrane. Disordered regions lie at residues 70–132 (HAAP…KPNY) and 149–172 (QPVR…GLAS). Residues 73 to 85 (PDVHPEAKFDTVN) are compositionally biased toward basic and acidic residues. Residues 90–99 (QQSTASPQQH) are compositionally biased toward polar residues. Residues 163–172 (SSSAASGLAS) are compositionally biased toward low complexity. Asn-226, Asn-470, and Asn-554 each carry an N-linked (GlcNAc...) asparagine glycan. Residues 586–606 (SVIDFVSNPILIIFLIGSLIY) form a helical membrane-spanning segment. The Cytoplasmic segment spans residues 607 to 1243 (NEKKLRRSYH…FREYYEPAGL (637 aa)). The interval 638–765 (GDESGDDKDG…QSHENDPALT (128 aa)) is disordered. Low complexity predominate over residues 650-660 (PSSPSPRSQPQ). Residues 674–693 (ERNAGDQDKVKDNRSLHDVS) show a composition bias toward basic and acidic residues. The segment covering 732–749 (KKKKAHRGRRGGVKHRKG) has biased composition (basic residues). Residues 809 to 1105 (VDTDVELGMG…SREVMAHPFF (297 aa)) form the Protein kinase domain. ATP contacts are provided by residues 815 to 823 (LGMGSNGTV) and Lys-837. Positions 819, 837, 881, and 883 each coordinate ADP. Asp-931 acts as the Proton acceptor in catalysis. 2 residues coordinate Mg(2+): Asn-936 and Asp-953. A KEN domain is found at 1108–1240 (PKKRLAFLCD…TDRFREYYEP (133 aa)).

This sequence belongs to the protein kinase superfamily. Ser/Thr protein kinase family. Mg(2+) serves as cofactor. Post-translationally, autophosphorylated mainly on serine residues; phosphorylation enables nucleotide binding by the active site.

The protein resides in the endoplasmic reticulum membrane. It catalyses the reaction L-seryl-[protein] + ATP = O-phospho-L-seryl-[protein] + ADP + H(+). The catalysed reaction is L-threonyl-[protein] + ATP = O-phospho-L-threonyl-[protein] + ADP + H(+). Functionally, senses unfolded proteins in the lumen of the endoplasmic reticulum via its N-terminal domain which leads to enzyme auto-activation. The active endoribonuclease domain splices precursor mRNAs to produce their mature form which then induces transcription of UPR target genes. This chain is Serine/threonine-protein kinase/endoribonuclease IRE1, found in Hypocrea jecorina (strain QM6a) (Trichoderma reesei).